Consider the following 161-residue polypeptide: MRLGSRLAVDVGKARIGLARSDPHGLIATPVETVPRDPAGSADVRRILAVATEIDCAELVVGLPLALSGRATASTDDAEGFARRLADATEIPVRLVDERLSTVSAQGALRASGRGSRKQKPVIDQVAAVIILQHALETERAAGSPPGALVPRNRVDPDRHA.

Residues Ala141 to Ala161 are disordered.

The protein belongs to the YqgF nuclease family.

It is found in the cytoplasm. In terms of biological role, could be a nuclease involved in processing of the 5'-end of pre-16S rRNA. The polypeptide is Putative pre-16S rRNA nuclease (Clavibacter michiganensis subsp. michiganensis (strain NCPPB 382)).